The primary structure comprises 303 residues: Bidirectional sugar transporter SWEET14 (303 aa).

Residues 1–9 (MAGMSLQHP) are Extracellular-facing. The helical transmembrane segment at 10 to 30 (WAFAFGLLGNIISFMTYLAPL) threads the bilayer. In terms of domain architecture, MtN3/slv 1 spans 13–98 (AFGLLGNIIS…AVYLVYAPKK (86 aa)). At 31–44 (PTFYRIYKSKSTQG) the chain is on the cytoplasmic side. The chain crosses the membrane as a helical span at residues 45–65 (FQSVPYVVALFSAMLWIYYAL). The Extracellular portion of the chain corresponds to 66-72 (LKSDECL). The helical transmembrane segment at 73–93 (LITINSAGCVIETIYIAVYLV) threads the bilayer. Residues 94–105 (YAPKKAKMFTAK) lie on the Cytoplasmic side of the membrane. A helical transmembrane segment spans residues 106-126 (LLLLVNVGVFGLILLLTLLLS). The Extracellular portion of the chain corresponds to 127–133 (AGDRRIV). The chain crosses the membrane as a helical span at residues 134–154 (VLGWVCVGFSVSVFVAPLSII). One can recognise a MtN3/slv 2 domain in the interval 134–217 (VLGWVCVGFS…MGLYAMYRNS (84 aa)). The Cytoplasmic portion of the chain corresponds to 155 to 167 (RLVVRTKSVEFMP). Residues 168-188 (FSLSFSLTISAVVWFLYGLLI) traverse the membrane as a helical segment. At 189-192 (KDKY) the chain is on the extracellular side. Residues 193–213 (VALPNVLGFSFGVIQMGLYAM) form a helical membrane-spanning segment. Topologically, residues 214 to 303 (YRNSTPKAVL…AGAGEKKVAA (90 aa)) are cytoplasmic. The interval 266-290 (HPVDVESPPAEAPPQEDDKAAAATA) is disordered.

Belongs to the SWEET sugar transporter family. Forms homooligomers and/or heterooligomers.

It is found in the cell membrane. Its function is as follows. Mediates both low-affinity uptake and efflux of sugar across the plasma membrane. The protein is Bidirectional sugar transporter SWEET14 (SWEET14) of Oryza sativa subsp. indica (Rice).